Consider the following 209-residue polypeptide: uncharacterized protein (209 aa).

It belongs to the flavoredoxin family. FMN serves as cofactor.

This is an uncharacterized protein from Halalkalibacterium halodurans (strain ATCC BAA-125 / DSM 18197 / FERM 7344 / JCM 9153 / C-125) (Bacillus halodurans).